Here is a 95-residue protein sequence, read N- to C-terminus: Co-chaperonin GroES (95 aa).

The protein belongs to the GroES chaperonin family. Heptamer of 7 subunits arranged in a ring. Interacts with the chaperonin GroEL.

It is found in the cytoplasm. Together with the chaperonin GroEL, plays an essential role in assisting protein folding. The GroEL-GroES system forms a nano-cage that allows encapsulation of the non-native substrate proteins and provides a physical environment optimized to promote and accelerate protein folding. GroES binds to the apical surface of the GroEL ring, thereby capping the opening of the GroEL channel. This chain is Co-chaperonin GroES, found in Marinobacter nauticus (strain ATCC 700491 / DSM 11845 / VT8) (Marinobacter aquaeolei).